The following is a 284-amino-acid chain: Tropomyosin alpha-1 chain (284 aa).

The disordered stretch occupies residues 1 to 38 (MDAIKKKMQMLKLDKENALDRAEQAEADKKGAEDKSKQ). Residues 1 to 284 (MDAIKKKMQM…DHALNDMTSI (284 aa)) adopt a coiled-coil conformation. Over residues 12-38 (KLDKENALDRAEQAEADKKGAEDKSKQ) the composition is skewed to basic and acidic residues.

Belongs to the tropomyosin family. In terms of assembly, homodimer. Heterodimer of an alpha (TPM1, TPM3 or TPM4) and a beta (TPM2) chain.

It is found in the cytoplasm. Its subcellular location is the cytoskeleton. In terms of biological role, binds to actin filaments in muscle and non-muscle cells. Plays a central role, in association with the troponin complex, in the calcium dependent regulation of vertebrate striated muscle contraction. Smooth muscle contraction is regulated by interaction with caldesmon. In non-muscle cells is implicated in stabilizing cytoskeleton actin filaments. The chain is Tropomyosin alpha-1 chain (tpm1) from Xenopus laevis (African clawed frog).